A 322-amino-acid chain; its full sequence is NADH-cytochrome b5 reductase 2 (322 aa).

A helical transmembrane segment spans residues 32 to 48 (LAPIYISVGLAGLGVGL). In terms of domain architecture, FAD-binding FR-type spans 72–176 (QGWVDLKLSE…KGPIPKYPWE (105 aa)). Residue 179–214 (KHKHICLIAGGTGITPMYQLARQIFKNPEDQTKVTL) participates in FAD binding.

It belongs to the flavoprotein pyridine nucleotide cytochrome reductase family. FAD serves as cofactor.

Its subcellular location is the mitochondrion outer membrane. It catalyses the reaction 2 Fe(III)-[cytochrome b5] + NADH = 2 Fe(II)-[cytochrome b5] + NAD(+) + H(+). In terms of biological role, may mediate the reduction of outer membrane cytochrome b5. The protein is NADH-cytochrome b5 reductase 2 (mcr1) of Aspergillus clavatus (strain ATCC 1007 / CBS 513.65 / DSM 816 / NCTC 3887 / NRRL 1 / QM 1276 / 107).